A 91-amino-acid chain; its full sequence is Probable Fe(2+)-trafficking protein (91 aa).

This sequence belongs to the Fe(2+)-trafficking protein family. In terms of assembly, monomer.

Could be a mediator in iron transactions between iron acquisition and iron-requiring processes, such as synthesis and/or repair of Fe-S clusters in biosynthetic enzymes. The sequence is that of Probable Fe(2+)-trafficking protein from Escherichia coli O6:H1 (strain CFT073 / ATCC 700928 / UPEC).